The sequence spans 317 residues: Large ribosomal subunit protein uL10 (317 aa).

It belongs to the universal ribosomal protein uL10 family. In terms of assembly, P0 forms a pentameric complex by interaction with dimers of P1 and P2. Post-translationally, phosphorylated.

In terms of biological role, ribosomal protein P0 is the functional equivalent of E.coli protein L10. This is Large ribosomal subunit protein uL10 (rplp0) from Ictalurus punctatus (Channel catfish).